A 354-amino-acid chain; its full sequence is L-Lys-D/L-Arg epimerase (354 aa).

Substrate contacts are provided by residues T135 and 160 to 162; that span reads KIK. 3 residues coordinate Mg(2+): D190, E215, and D240. Substrate contacts are provided by residues K265, D295, and 318 to 320; that span reads DLD.

The protein belongs to the mandelate racemase/muconate lactonizing enzyme family. Requires Mg(2+) as cofactor.

Its function is as follows. Catalyzes the epimerization of L-Lys-L-Arg to L-Lys-D-Arg (in vitro). Catalyzes the epimerization of positively charged dipeptides, with a preference for substrates with a basic amino acid in the second position. Has epimerase activity with L-Lys-L-Lys, L-Arg-L-Arg, L-Val-L-Arg, L-Val-L-Lys and L-Ala-L-Arg (in vitro). This is L-Lys-D/L-Arg epimerase from Desulforapulum autotrophicum (strain ATCC 43914 / DSM 3382 / VKM B-1955 / HRM2) (Desulfobacterium autotrophicum).